The following is a 141-amino-acid chain: Hemoglobin subunit alpha (141 aa).

One can recognise a Globin domain in the interval 1–141; that stretch reads VLSPDDKKHV…VSTVLTSKYR (141 aa). Serine 3 is modified (phosphoserine). Lysine 7 and lysine 11 each carry N6-succinyllysine. Residue lysine 16 is modified to N6-acetyllysine; alternate. At lysine 16 the chain carries N6-succinyllysine; alternate. Position 24 is a phosphotyrosine (tyrosine 24). Position 35 is a phosphoserine (serine 35). N6-succinyllysine is present on lysine 40. Residue serine 49 is modified to Phosphoserine. Histidine 58 serves as a coordination point for O2. Residue histidine 87 participates in heme b binding. Serine 102 is subject to Phosphoserine. Phosphothreonine is present on threonine 108. Phosphoserine occurs at positions 124 and 131. Phosphothreonine is present on residues threonine 134 and threonine 137. Serine 138 is subject to Phosphoserine.

The protein belongs to the globin family. As to quaternary structure, heterotetramer of two alpha chains and two beta chains. Red blood cells.

Functionally, involved in oxygen transport from the lung to the various peripheral tissues. Hemopressin acts as an antagonist peptide of the cannabinoid receptor CNR1. Hemopressin-binding efficiently blocks cannabinoid receptor CNR1 and subsequent signaling. The sequence is that of Hemoglobin subunit alpha (HBA) from Theropithecus gelada (Gelada baboon).